We begin with the raw amino-acid sequence, 130 residues long: Small ribosomal subunit protein uS8 (130 aa).

The protein belongs to the universal ribosomal protein uS8 family. As to quaternary structure, part of the 30S ribosomal subunit.

One of the primary rRNA binding proteins, it binds directly to 16S rRNA central domain where it helps coordinate assembly of the platform of the 30S subunit. This Methanococcoides burtonii (strain DSM 6242 / NBRC 107633 / OCM 468 / ACE-M) protein is Small ribosomal subunit protein uS8.